The following is an 85-amino-acid chain: SKP1-like protein 6 (85 aa).

The segment at 65–85 is interaction with the F-box domain of F-box proteins; sequence MMAANYLNIQSLLDLTFSNCR.

It belongs to the SKP1 family. In terms of assembly, part of a SCF (SKP1-cullin-F-box) protein ligase complex.

The protein localises to the nucleus. Its pathway is protein modification; protein ubiquitination. Its function is as follows. Involved in ubiquitination and subsequent proteasomal degradation of target proteins. Together with CUL1, RBX1 and a F-box protein, it forms a SCF E3 ubiquitin ligase complex. The functional specificity of this complex depends on the type of F-box protein. In the SCF complex, it serves as an adapter that links the F-box protein to CUL1. The polypeptide is SKP1-like protein 6 (ASK6) (Arabidopsis thaliana (Mouse-ear cress)).